Consider the following 263-residue polypeptide: S-acyl fatty acid synthase thioesterase, medium chain (263 aa).

M1 is modified (N-acetylmethionine). Catalysis depends on residues S101 and H237. Residues 262–263 (LT) form an important for interaction with FASN region.

This sequence belongs to the thioesterase family. As to quaternary structure, interacts (via C-terminus) with FASN.

Its subcellular location is the cytoplasm. The protein localises to the cytosol. The catalysed reaction is (9Z)-octadecenoyl-[ACP] + H2O = (9Z)-octadecenoate + holo-[ACP] + H(+). It catalyses the reaction decanoyl-CoA + H2O = decanoate + CoA + H(+). It carries out the reaction dodecanoyl-CoA + H2O = dodecanoate + CoA + H(+). The enzyme catalyses tetradecanoyl-CoA + H2O = tetradecanoate + CoA + H(+). The catalysed reaction is hexadecanoyl-CoA + H2O = hexadecanoate + CoA + H(+). Functionally, contributes to the release of free fatty acids from fatty acid synthase (FASN). Has broad substrate specificity, giving rise to a range of free fatty acids with chain lengths between 10 and 16 carbon atoms (C10 - C16). This chain is S-acyl fatty acid synthase thioesterase, medium chain, found in Rattus norvegicus (Rat).